Here is a 574-residue protein sequence, read N- to C-terminus: Isocitrate dehydrogenase kinase/phosphatase (574 aa).

ATP is bound by residues 315–321 and Lys336; that span reads APGIRGM. Residue Asp371 is part of the active site.

This sequence belongs to the AceK family.

Its subcellular location is the cytoplasm. It carries out the reaction L-seryl-[isocitrate dehydrogenase] + ATP = O-phospho-L-seryl-[isocitrate dehydrogenase] + ADP + H(+). Its function is as follows. Bifunctional enzyme which can phosphorylate or dephosphorylate isocitrate dehydrogenase (IDH) on a specific serine residue. This is a regulatory mechanism which enables bacteria to bypass the Krebs cycle via the glyoxylate shunt in response to the source of carbon. When bacteria are grown on glucose, IDH is fully active and unphosphorylated, but when grown on acetate or ethanol, the activity of IDH declines drastically concomitant with its phosphorylation. In Escherichia coli (strain SMS-3-5 / SECEC), this protein is Isocitrate dehydrogenase kinase/phosphatase.